Consider the following 140-residue polypeptide: MSKRGRGGTSGNKFRMSLGLPVAATVNCADNTGAKNLYIISVKGIKGRLNRLPSACVGDMVMATVKKGKPDLRKKVLPAVIVRQRKPWRRKDGVFMYFEDNAGVIVNPKGEMKGSAITGPIGKECADLWPRIASAANAIV.

Belongs to the universal ribosomal protein uL14 family.

The sequence is that of Large ribosomal subunit protein uL14x/uL14z/uL14y (RPL23A) from Arabidopsis thaliana (Mouse-ear cress).